The chain runs to 139 residues: D-ribose pyranase (139 aa).

Histidine 20 functions as the Proton donor in the catalytic mechanism. Substrate is bound by residues aspartate 28, histidine 106, and 128-130 (YAN).

This sequence belongs to the RbsD / FucU family. RbsD subfamily. As to quaternary structure, homodecamer.

It localises to the cytoplasm. The catalysed reaction is beta-D-ribopyranose = beta-D-ribofuranose. It functions in the pathway carbohydrate metabolism; D-ribose degradation; D-ribose 5-phosphate from beta-D-ribopyranose: step 1/2. In terms of biological role, catalyzes the interconversion of beta-pyran and beta-furan forms of D-ribose. This chain is D-ribose pyranase, found in Vibrio vulnificus (strain CMCP6).